The following is a 957-amino-acid chain: Mediator of RNA polymerase II transcription subunit 16 (957 aa).

The disordered stretch occupies residues 855 to 883 (YTEVDAAPSGKTNAQGPPQQPQPQQQRRR).

This sequence belongs to the Mediator complex subunit 16 family. As to quaternary structure, component of the Mediator complex.

Its subcellular location is the nucleus. Functionally, component of the Mediator complex, a coactivator involved in the regulated transcription of nearly all RNA polymerase II-dependent genes. Mediator functions as a bridge to convey information from gene-specific regulatory proteins to the basal RNA polymerase II transcription machinery. Mediator is recruited to promoters by direct interactions with regulatory proteins and serves as a scaffold for the assembly of a functional preinitiation complex with RNA polymerase II and the general transcription factors. This is Mediator of RNA polymerase II transcription subunit 16 (sin4) from Aspergillus clavatus (strain ATCC 1007 / CBS 513.65 / DSM 816 / NCTC 3887 / NRRL 1 / QM 1276 / 107).